A 254-amino-acid chain; its full sequence is Triosephosphate isomerase (254 aa).

Residue 10–12 (NWK) participates in substrate binding. Residue H99 is the Electrophile of the active site. The active-site Proton acceptor is E169. Residues G175, S215, and 236–237 (GG) each bind substrate.

This sequence belongs to the triosephosphate isomerase family. Homodimer.

Its subcellular location is the cytoplasm. It catalyses the reaction D-glyceraldehyde 3-phosphate = dihydroxyacetone phosphate. It functions in the pathway carbohydrate biosynthesis; gluconeogenesis. It participates in carbohydrate degradation; glycolysis; D-glyceraldehyde 3-phosphate from glycerone phosphate: step 1/1. Involved in the gluconeogenesis. Catalyzes stereospecifically the conversion of dihydroxyacetone phosphate (DHAP) to D-glyceraldehyde-3-phosphate (G3P). This Chlamydia felis (strain Fe/C-56) (Chlamydophila felis) protein is Triosephosphate isomerase.